The sequence spans 307 residues: Ornithine carbamoyltransferase (307 aa).

Carbamoyl phosphate contacts are provided by residues 53–56 (STRT), glutamine 80, arginine 104, and 131–134 (HPCQ). L-ornithine-binding positions include asparagine 162, aspartate 220, and 224 to 225 (SM). Carbamoyl phosphate is bound by residues 260–261 (CL) and arginine 288.

It belongs to the aspartate/ornithine carbamoyltransferase superfamily. OTCase family.

Its subcellular location is the cytoplasm. It catalyses the reaction carbamoyl phosphate + L-ornithine = L-citrulline + phosphate + H(+). Its pathway is amino-acid biosynthesis; L-arginine biosynthesis; L-arginine from L-ornithine and carbamoyl phosphate: step 1/3. Reversibly catalyzes the transfer of the carbamoyl group from carbamoyl phosphate (CP) to the N(epsilon) atom of ornithine (ORN) to produce L-citrulline. The sequence is that of Ornithine carbamoyltransferase from Nitrosomonas europaea (strain ATCC 19718 / CIP 103999 / KCTC 2705 / NBRC 14298).